Reading from the N-terminus, the 461-residue chain is Zinc finger protein ZFP2 (461 aa).

13 C2H2-type zinc fingers span residues Tyr102 to His124, Tyr130 to His152, Tyr158 to His180, Tyr186 to His208, Tyr214 to His236, Tyr242 to His264, Tyr270 to His292, Tyr298 to His320, Phe326 to His348, Tyr354 to His376, Tyr382 to His404, Tyr410 to His432, and Tyr438 to His460.

The protein belongs to the krueppel C2H2-type zinc-finger protein family.

The protein localises to the nucleus. Functionally, probable transcription factor involved in neuronal differentiation and/or phenotypic maintenance. This chain is Zinc finger protein ZFP2 (ZFP2), found in Homo sapiens (Human).